Reading from the N-terminus, the 949-residue chain is General transcription factor II-I repeat domain-containing protein 2B (949 aa).

GTF2I-like repeat units follow at residues 98-192 (QVHS…QLGG) and 323-417 (LSSI…SNVG).

Belongs to the TFII-I family. Ubiquitous.

The protein resides in the nucleus. This is General transcription factor II-I repeat domain-containing protein 2B (GTF2IRD2B) from Homo sapiens (Human).